The sequence spans 622 residues: Peptidoglycan O-acetyltransferase OatA (622 aa).

Helical transmembrane passes span 11–31, 39–59, 81–101, 143–163, 173–193, 212–232, 237–257, 267–287, 307–327, 334–354, and 387–407; these read YVPS…AYHL, GFIG…NILL, LIPA…FFHP, LWSL…LLVF, LLKI…ILYV, LLSG…PVVP, AVLN…TAFV, GGLL…SHPA, YGIY…LEIT, AILQ…FIET, and IAGV…VLSV. The disordered stretch occupies residues 412-467; the sequence is EKQQTSVKTTTSTPDEKKDDKKEDKATKDKEADSNKASEQKETQKPDNKNKSAATP. The segment covering 413-424 has biased composition (low complexity); that stretch reads KQQTSVKTTTST. Over residues 425 to 461 the composition is skewed to basic and acidic residues; that stretch reads PDEKKDDKKEDKATKDKEADSNKASEQKETQKPDNKN. Catalysis depends on residues serine 480, aspartate 600, and histidine 603.

It belongs to the acyltransferase 3 family.

It is found in the cell membrane. The protein localises to the secreted. It localises to the cell wall. Its function is as follows. Responsible for O-acetylation at the C6-hydroxyl group of N-acetylmuramyl residues, forming the corresponding N,6-O-diacetylmuramic acid of the peptidoglycan. O-acetylation of the peptidoglycan is the major determinant for lysozyme resistance. Critical for virulence and escape from innate immune response of the host. Involved at both early and later stages of listeriosis in the mouse model of infection. Required for successful host colonization and for intracellular survival of bacteria in macrophages of the infected host. Controls the production of inflammatory mediators in the liver of the infected host. Confers resistance to host antimicrobial molecules and to cell wall-targeting molecules such as beta-lactam antibiotics and bacteriocins. This chain is Peptidoglycan O-acetyltransferase OatA, found in Listeria monocytogenes serovar 1/2a (strain ATCC BAA-679 / EGD-e).